The primary structure comprises 60 residues: Myrmicitoxin(1)-Pr4a (60 aa).

The signal sequence occupies residues 1-23; that stretch reads MKAIIFLFAVLTVVAIIIPIISG. A propeptide spanning residues 24 to 33 is cleaved from the precursor; the sequence is EPNAGPHAAS. At Gln59 the chain carries Glutamine amide.

The protein belongs to the formicidae venom clade 2 family. As to expression, expressed by the venom gland.

Its subcellular location is the secreted. Functionally, toxin that causes a rapid and irreversible paralysis when intrathoracically injected into insects (blowflies). Does not cause spontaneous nocifensive behaviors by intraplantar injection in mice. The chain is Myrmicitoxin(1)-Pr4a from Pogonomyrmex rugosus (Desert harvester ant).